Consider the following 153-residue polypeptide: ORM1-like protein 1 (153 aa).

At 1–26 (MNVGVAHSEVNPNTRVMNSRGMWLTY) the chain is on the cytoplasmic side. 2 helical membrane-spanning segments follow: residues 27-46 (ALGV…FSVP) and 47-64 (VAWT…YVFL). Topologically, residues 65–100 (HAVKGTPFETPDQGKARLLTHWEQLDYGVQFTSSRK) are cytoplasmic. A helical membrane pass occupies residues 101-121 (FFTISPIILYFLASFYTKYDP). Residues 122 to 123 (TH) are Extracellular-facing. A helical membrane pass occupies residues 124 to 140 (FILNTASLLSVLIPKMP). At 141–153 (QLHGVRIFGINKY) the chain is on the cytoplasmic side.

This sequence belongs to the ORM family. In terms of assembly, ceramide-sensitive subunit of the serine palmitoyltransferase (SPT) complex, which is also composed of SPTLC1, SPTLC2/3 and SPTSSA/B. As to expression, widely expressed. Expressed in adult and fetal heart, brain, lung, liver, skeletal muscle and kidney. Expressed in adult pancreas and placenta and in fetal spleen abd thymus. Expressed at intermediate level in pancreas, placenta and brain but low in skeletal muscle and lung.

The protein resides in the endoplasmic reticulum membrane. Plays an essential role in the homeostatic regulation of sphingolipid de novo biosynthesis by modulating the activity of the serine palmitoyltransferase (SPT) in response to ceramide levels. When complexed to SPT, the binding of ceramides to its N-terminus stabilizes a conformation that block SPT substrate entry, hence preventing SPT catalytic activity. Through this mechanism, maintains ceramide levels at sufficient concentrations for the production of complex sphingolipids, but which prevents the accumulation of ceramides to levels that trigger apoptosis. The polypeptide is ORM1-like protein 1 (ORMDL1) (Homo sapiens (Human)).